The chain runs to 424 residues: UDP-N-acetylglucosamine 1-carboxyvinyltransferase 3 (424 aa).

22-23 is a binding site for phosphoenolpyruvate; the sequence is KN. Residue Arg94 coordinates UDP-N-acetyl-alpha-D-glucosamine. Asp118 serves as the catalytic Proton donor. Residues 123-127, Asp306, and Leu328 each bind UDP-N-acetyl-alpha-D-glucosamine; that span reads RPVDQ.

It belongs to the EPSP synthase family. MurA subfamily.

The protein resides in the cytoplasm. The enzyme catalyses phosphoenolpyruvate + UDP-N-acetyl-alpha-D-glucosamine = UDP-N-acetyl-3-O-(1-carboxyvinyl)-alpha-D-glucosamine + phosphate. Its pathway is cell wall biogenesis; peptidoglycan biosynthesis. Functionally, cell wall formation. Adds enolpyruvyl to UDP-N-acetylglucosamine. This chain is UDP-N-acetylglucosamine 1-carboxyvinyltransferase 3, found in Symbiobacterium thermophilum (strain DSM 24528 / JCM 14929 / IAM 14863 / T).